The chain runs to 165 residues: Type 3 secretion system regulator YopR (165 aa).

This sequence belongs to the YopR family.

It localises to the secreted. May be involved in the regulation of the assembly of the type III secretion system (T3SS), also called injectisome, which is used to inject bacterial effector proteins into eukaryotic host cells. May control the secretion and/or polymerization of YscF/SctF, the principal component of the needle filament, thereby impacting the assembly of the T3SS. Involved in pathogenesis. This Yersinia pestis protein is Type 3 secretion system regulator YopR.